A 280-amino-acid chain; its full sequence is MRLQDEVVLVTGGCAGLGRAIVDRFVCEGARVAVLDRSVAGLEELRAAHGDAVVAVEGDVRYLDSHKETVAKCVETFGKLDCYIGNAGVWDYSTALVEIPEDRLDEAFDEMYSINVKGYLLGVKAALGALYASRGSVIFTVSNAGFYPAGGGALYTGAKHAIVGMVKQLAYELGPHIRVNGIAPGGLGGSDLRGLKALDLAEVSLSKVPLGDMLKDILPTGQMASAEESTGAYVFFATRSETVPLTGSVLNYDGGIGVRGMSEANRGDLLDQFYSKGALV.

NAD(+) is bound at residue 9–33; the sequence is LVTGGCAGLGRAIVDRFVCEGARVA. Serine 142 is a binding site for substrate. The active-site Proton acceptor is the tyrosine 155.

This sequence belongs to the short-chain dehydrogenases/reductases (SDR) family.

It carries out the reaction (2R,3S)-3-phenylcyclohexa-3,5-diene-1,2-diol + NAD(+) = biphenyl-2,3-diol + NADH + H(+). The protein operates within xenobiotic degradation; biphenyl degradation; 2-hydroxy-2,4-pentadienoate and benzoate from biphenyl: step 2/4. The chain is Cis-2,3-dihydrobiphenyl-2,3-diol dehydrogenase (bphB) from Rhodococcus globerulus.